Reading from the N-terminus, the 317-residue chain is Glutamyl-tRNA reductase-binding protein, chloroplastic (317 aa).

Residues 1-42 (MQLQTQSFALNLLPSPNFAKPIERREFISLKRDPSRPISLRC) constitute a chloroplast transit peptide.

In terms of assembly, interacts with HEMA1 and forms a heterotetramer of two GLUTRBP and two HEMA1 subunits.

Its subcellular location is the plastid. It localises to the chloroplast stroma. In terms of biological role, involved in the regulation of glutamyl-tRNA reductase (GluTR) which is important for the synthesis and distribution of 5-aminolevulinate, a precursor in heme and chlorophyll biosynthesis. Stimulates GluTR activity and regulates glutamate-1-semialdehyde release. May play a role in heme metabolism. Necessary for efficient photosynthetic electron transport in chloroplasts. The chain is Glutamyl-tRNA reductase-binding protein, chloroplastic from Arabidopsis thaliana (Mouse-ear cress).